The sequence spans 296 residues: Formamidopyrimidine-DNA glycosylase (296 aa).

P2 functions as the Schiff-base intermediate with DNA in the catalytic mechanism. The Proton donor role is filled by E3. The Proton donor; for beta-elimination activity role is filled by K61. The DNA site is built by H95, R122, and K169. The FPG-type zinc finger occupies 255 to 289 (NAYGRNDQPCARCGTPIQRETFMNRSSYSCPRCQP). R279 serves as the catalytic Proton donor; for delta-elimination activity.

The protein belongs to the FPG family. As to quaternary structure, monomer. It depends on Zn(2+) as a cofactor.

It carries out the reaction Hydrolysis of DNA containing ring-opened 7-methylguanine residues, releasing 2,6-diamino-4-hydroxy-5-(N-methyl)formamidopyrimidine.. The catalysed reaction is 2'-deoxyribonucleotide-(2'-deoxyribose 5'-phosphate)-2'-deoxyribonucleotide-DNA = a 3'-end 2'-deoxyribonucleotide-(2,3-dehydro-2,3-deoxyribose 5'-phosphate)-DNA + a 5'-end 5'-phospho-2'-deoxyribonucleoside-DNA + H(+). Functionally, involved in base excision repair of DNA damaged by oxidation or by mutagenic agents. Acts as a DNA glycosylase that recognizes and removes damaged bases. Has a preference for oxidized purines, such as 7,8-dihydro-8-oxoguanine (8-oxoG). Has AP (apurinic/apyrimidinic) lyase activity and introduces nicks in the DNA strand. Cleaves the DNA backbone by beta-delta elimination to generate a single-strand break at the site of the removed base with both 3'- and 5'-phosphates. In Thermobifida fusca (strain YX), this protein is Formamidopyrimidine-DNA glycosylase.